Reading from the N-terminus, the 279-residue chain is Dermonecrotic toxin StSicTox-betaIB1i (279 aa).

Residue His12 is part of the active site. Mg(2+)-binding residues include Glu32 and Asp34. The Nucleophile role is filled by His48. Intrachain disulfides connect Cys52–Cys58 and Cys54–Cys198. A Mg(2+)-binding site is contributed by Asp92.

Belongs to the arthropod phospholipase D family. Class II subfamily. Class IIb sub-subfamily. The cofactor is Mg(2+). Expressed by the venom gland.

It localises to the secreted. The catalysed reaction is an N-(acyl)-sphingosylphosphocholine = an N-(acyl)-sphingosyl-1,3-cyclic phosphate + choline. It catalyses the reaction N-hexanoyl-sphing-4-enine-1-phosphocholine = N-(hexanoyl)-sphing-4-enine-1,3-cyclic phosphate + choline. It carries out the reaction an N-(acyl)-sphingosylphosphoethanolamine = an N-(acyl)-sphingosyl-1,3-cyclic phosphate + ethanolamine. The enzyme catalyses N-dodecanoyl-heptadecasphing-4-enine-1-phosphoethanolamine = N-dodecanoyl-heptadecasphing-4-enine-1,3-cyclic phosphate + ethanolamine. The catalysed reaction is a 1-acyl-sn-glycero-3-phosphoethanolamine = a 1-acyl-sn-glycero-2,3-cyclic phosphate + ethanolamine. It catalyses the reaction 1-tetradecanoyl-sn-glycero-3-phosphoethanolamine = 1-tetradecanoyl-sn-glycero-2,3-cyclic phosphate + ethanolamine. Dermonecrotic toxins cleave the phosphodiester linkage between the phosphate and headgroup of certain phospholipids (sphingolipid and lysolipid substrates), forming an alcohol (often choline) and a cyclic phosphate. This toxin acts on lysophosphatidylethanolamine (LPE) and ceramide phosphoethanolamine (CPE) with high activity. This toxin acts on sphingomyelin (SM) with very low activity and is not active on lysophosphatidylserine (LPS), lysophosphatidylcholine (LPC) and lysophosphatidylglycerol (LPG). It acts by transphosphatidylation, releasing exclusively cyclic phosphate as second products. It is not surprising that spider toxins have affinity for ethanolamine-containing sphingolipids since they are common in insect prey. Induces dermonecrosis, hemolysis, increased vascular permeability, edema, inflammatory response, and platelet aggregation. This chain is Dermonecrotic toxin StSicTox-betaIB1i, found in Sicarius terrosus (Cave spider).